The sequence spans 351 residues: Cytoplasmic dynein 2 light intermediate chain 1 (351 aa).

A disordered region spans residues 303 to 335; the sequence is GTLKAVQDPARDPQYAESEVDEMRVQKDQELEH. A compositionally biased stretch (basic and acidic residues) spans 323-335; sequence DEMRVQKDQELEH.

This sequence belongs to the dynein light intermediate chain family. In terms of assembly, light intermediate chain of the cytoplasmic dynein complex 2, a multisubunit complex composed at least of eleven different proteins. The cytoplasmic dynein 2 complex consists of two catalytic heavy chains (HCs) and a number of non-catalytic subunits presented by intermediate chains (ICs), light intermediate chains (LICs) and light chains (LCs). Among them, a heavy chain (DYNC2H1), two intermediate chains (DYNC2I2 and DYNC2I1), a light intermediate chain (DYNC2LI1), and a light chain (DYNLT2B) are unique to the dynein-2 complex, but a subset of light chains are also shared by dynein-1 and dynein-2 complexes. Dynein-2 complex is built around two copies of cytoplasmic dynein 2 heavy chain 1 (DYNC2H1). The C-terminal region forms the motor domain, which converts the energy from ATP hydrolysis into movement. Its N-terminal region forms the tail, an extended structure that binds the other subunits and holds the two heavy chains in a homodimer. Interacts with DYNC2H1 (via N-terminus); this interaction stabilizes the dynein-2 complex structure. In terms of tissue distribution, specifically expressed by ciliated cells in brain, lung, spleen, testis and kidney (at protein level). Enriched in the ependymal layer lining the lateral ventricles (at protein level).

The protein resides in the cytoplasm. It localises to the cell projection. The protein localises to the cilium. It is found in the cytoskeleton. Its subcellular location is the cilium basal body. The protein resides in the cilium axoneme. It localises to the microtubule organizing center. The protein localises to the centrosome. Functionally, acts as one of several non-catalytic accessory components of the cytoplasmic dynein 2 complex (dynein-2 complex), a motor protein complex that drives the movement of cargos along microtubules within cilia and flagella in concert with the intraflagellar transport (IFT) system, facilitating the assembly of these organelles. Involved in the regulation of ciliary length. The protein is Cytoplasmic dynein 2 light intermediate chain 1 (Dync2li1) of Mus musculus (Mouse).